Here is a 518-residue protein sequence, read N- to C-terminus: Probable carboxypeptidase 2 (518 aa).

Residues M1–A21 form the signal peptide. N46 carries an N-linked (GlcNAc...) asparagine glycan. The segment at P53 to E76 is disordered. One can recognise a Peptidase M14 domain in the interval G71–A351. The N-linked (GlcNAc...) asparagine glycan is linked to N116. Positions 136, 139, and 224 each coordinate Zn(2+). The active-site Proton donor/acceptor is E322. N393 and N459 each carry an N-linked (GlcNAc...) asparagine glycan.

This sequence belongs to the peptidase M14 family. It depends on Zn(2+) as a cofactor.

It localises to the secreted. Functionally, extracellular metalloprotease that contributes to pathogenicity. This is Probable carboxypeptidase 2 (MCPB) from Trichophyton verrucosum (strain HKI 0517).